The sequence spans 289 residues: Protease HtpX homolog (289 aa).

Helical transmembrane passes span 3–23 (IVGT…WFFF) and 28–48 (TILA…YKVG). His129 lines the Zn(2+) pocket. The active site involves Glu130. Zn(2+) is bound at residue His133. The next 2 helical transmembrane spans lie at 144-164 (LGQG…LFSG) and 172-192 (FLAI…VLAI). Zn(2+) is bound at residue Glu197. The disordered stretch occupies residues 222–250 (SQGNEQAAQQQRQRTSRGRGRRQRGQRND). The segment covering 235 to 246 (RTSRGRGRRQRG) has biased composition (basic residues).

This sequence belongs to the peptidase M48B family. Requires Zn(2+) as cofactor.

Its subcellular location is the cell membrane. This Halobacterium salinarum (strain ATCC 700922 / JCM 11081 / NRC-1) (Halobacterium halobium) protein is Protease HtpX homolog.